The following is a 214-amino-acid chain: Thymidylate kinase (214 aa).

ATP is bound at residue 7-14 (GIDGAGKS).

The protein belongs to the thymidylate kinase family.

It carries out the reaction dTMP + ATP = dTDP + ADP. Functionally, phosphorylation of dTMP to form dTDP in both de novo and salvage pathways of dTTP synthesis. The polypeptide is Thymidylate kinase (Chlorobium luteolum (strain DSM 273 / BCRC 81028 / 2530) (Pelodictyon luteolum)).